The sequence spans 241 residues: 7-cyano-7-deazaguanine synthase (241 aa).

An ATP-binding site is contributed by 9-19 (LSGGLDSSTVL). Positions 189, 197, 200, and 203 each coordinate Zn(2+).

This sequence belongs to the QueC family. It depends on Zn(2+) as a cofactor.

The catalysed reaction is 7-carboxy-7-deazaguanine + NH4(+) + ATP = 7-cyano-7-deazaguanine + ADP + phosphate + H2O + H(+). Its pathway is purine metabolism; 7-cyano-7-deazaguanine biosynthesis. Catalyzes the ATP-dependent conversion of 7-carboxy-7-deazaguanine (CDG) to 7-cyano-7-deazaguanine (preQ(0)). In Thermoplasma volcanium (strain ATCC 51530 / DSM 4299 / JCM 9571 / NBRC 15438 / GSS1), this protein is 7-cyano-7-deazaguanine synthase.